The chain runs to 467 residues: Tubulointerstitial nephritis antigen-like (467 aa).

The signal sequence occupies residues 1–21 (MWGCPLGLLLLLLAGQAALEA). The SMB domain occupies 49 to 96 (EQDMCCRGRADECALPYLGATCYCDLFCNRTVSDCCPDFWDFCLGIPP). 5 disulfide bridges follow: Cys-53/Cys-72, Cys-70/Cys-72, Cys-70/Cys-84, Cys-76/Cys-83, and Cys-84/Cys-91. N-linked (GlcNAc...) asparagine glycosylation occurs at Asn-77. An N-linked (GlcNAc...) asparagine glycan is attached at Asn-160.

This sequence belongs to the peptidase C1 family. Glycosylated.

Its subcellular location is the secreted. In terms of biological role, may be implicated in the adrenocortical zonation and in mechanisms for repressing the CYP11B1 gene expression in adrenocortical cells. This is a non catalytic peptidase C1 family protein. This is Tubulointerstitial nephritis antigen-like (Tinagl1) from Rattus norvegicus (Rat).